We begin with the raw amino-acid sequence, 406 residues long: Lissencephaly-1 homolog (406 aa).

Positions 7–39 (QREELNKAIADYLRSNGYESALEAFQKEAEMPG) constitute a LisH domain. The stretch at 54 to 81 (TSVIRLQKKVMDLEAKLAEAEKEFQSGG) forms a coiled coil. Positions 74–89 (EKEFQSGGPNKKERSP) are enriched in basic and acidic residues. Residues 74–99 (EKEFQSGGPNKKERSPSEWIPRPPAR) form a disordered region. WD repeat units lie at residues 104-145 (GHRS…RTLK), 146-185 (GHTD…NIKT), 188-227 (GHDH…CVKT), 230-269 (GHRE…CKAE), 272-329 (EHEH…CIMT), 332-371 (GHDN…CQKT), and 374-406 (AHQH…WECR).

This sequence belongs to the WD repeat LIS1/nudF family.

The protein localises to the cytoplasm. It is found in the cytoskeleton. Its subcellular location is the microtubule organizing center. It localises to the centrosome. Functionally, positively regulates the activity of the minus-end directed microtubule motor protein dynein. May enhance dynein-mediated microtubule sliding by targeting dynein to the microtubule plus end. Required for several dynein- and microtubule-dependent processes. The chain is Lissencephaly-1 homolog from Branchiostoma floridae (Florida lancelet).